We begin with the raw amino-acid sequence, 382 residues long: 1-deoxy-D-xylulose 5-phosphate reductoisomerase (382 aa).

Residues threonine 10, glycine 11, serine 12, isoleucine 13, glycine 36, and asparagine 122 each contribute to the NADPH site. Lysine 123 contributes to the 1-deoxy-D-xylulose 5-phosphate binding site. Glutamate 124 provides a ligand contact to NADPH. Residue aspartate 148 participates in Mn(2+) binding. The 1-deoxy-D-xylulose 5-phosphate site is built by serine 149, glutamate 150, serine 174, and histidine 197. A Mn(2+)-binding site is contributed by glutamate 150. Position 203 (glycine 203) interacts with NADPH. Residues serine 210, asparagine 215, lysine 216, and glutamate 219 each contribute to the 1-deoxy-D-xylulose 5-phosphate site. Glutamate 219 lines the Mn(2+) pocket.

It belongs to the DXR family. It depends on Mg(2+) as a cofactor. Mn(2+) is required as a cofactor.

It carries out the reaction 2-C-methyl-D-erythritol 4-phosphate + NADP(+) = 1-deoxy-D-xylulose 5-phosphate + NADPH + H(+). Its pathway is isoprenoid biosynthesis; isopentenyl diphosphate biosynthesis via DXP pathway; isopentenyl diphosphate from 1-deoxy-D-xylulose 5-phosphate: step 1/6. In terms of biological role, catalyzes the NADPH-dependent rearrangement and reduction of 1-deoxy-D-xylulose-5-phosphate (DXP) to 2-C-methyl-D-erythritol 4-phosphate (MEP). This is 1-deoxy-D-xylulose 5-phosphate reductoisomerase from Pelodictyon phaeoclathratiforme (strain DSM 5477 / BU-1).